The primary structure comprises 121 residues: Small ribosomal subunit protein uS13 (121 aa).

Residues arginine 93–serine 121 are disordered.

This sequence belongs to the universal ribosomal protein uS13 family. In terms of assembly, part of the 30S ribosomal subunit. Forms a loose heterodimer with protein S19. Forms two bridges to the 50S subunit in the 70S ribosome.

In terms of biological role, located at the top of the head of the 30S subunit, it contacts several helices of the 16S rRNA. In the 70S ribosome it contacts the 23S rRNA (bridge B1a) and protein L5 of the 50S subunit (bridge B1b), connecting the 2 subunits; these bridges are implicated in subunit movement. Contacts the tRNAs in the A and P-sites. The protein is Small ribosomal subunit protein uS13 of Campylobacter lari (strain RM2100 / D67 / ATCC BAA-1060).